The chain runs to 271 residues: Dirigent protein 17 (271 aa).

Residues 1–12 (MEDTGSIKQEAQ) show a composition bias toward polar residues. The tract at residues 1–22 (MEDTGSIKQEAQSHPPGIFEIP) is disordered. N-linked (GlcNAc...) asparagine glycosylation occurs at Asn-255.

Belongs to the plant dirigent protein family. As to quaternary structure, homodimer.

Its subcellular location is the secreted. It localises to the extracellular space. It is found in the apoplast. Functionally, dirigent proteins impart stereoselectivity on the phenoxy radical-coupling reaction, yielding optically active lignans from two molecules of coniferyl alcohol in the biosynthesis of lignans, flavonolignans, and alkaloids and thus plays a central role in plant secondary metabolism. The protein is Dirigent protein 17 (DIR17) of Arabidopsis thaliana (Mouse-ear cress).